A 202-amino-acid polypeptide reads, in one-letter code: GTP cyclohydrolase 1 (202 aa).

Positions 90, 93, and 163 each coordinate Zn(2+).

Belongs to the GTP cyclohydrolase I family. In terms of assembly, homomer.

It carries out the reaction GTP + H2O = 7,8-dihydroneopterin 3'-triphosphate + formate + H(+). It participates in cofactor biosynthesis; 7,8-dihydroneopterin triphosphate biosynthesis; 7,8-dihydroneopterin triphosphate from GTP: step 1/1. This is GTP cyclohydrolase 1 from Mycobacterium marinum (strain ATCC BAA-535 / M).